A 201-amino-acid polypeptide reads, in one-letter code: Recombination protein RecR (201 aa).

The C4-type zinc-finger motif lies at 57–72 (CQQCRNFTEEALCEIC). The region spanning 81–176 (TTLCIVETPG…NISRIAHGVP (96 aa)) is the Toprim domain.

The protein belongs to the RecR family.

In terms of biological role, may play a role in DNA repair. It seems to be involved in an RecBC-independent recombinational process of DNA repair. It may act with RecF and RecO. The sequence is that of Recombination protein RecR from Colwellia psychrerythraea (strain 34H / ATCC BAA-681) (Vibrio psychroerythus).